Reading from the N-terminus, the 1360-residue chain is DNA-directed RNA polymerase subunit beta (1360 aa).

It belongs to the RNA polymerase beta chain family. As to quaternary structure, the RNAP catalytic core consists of 2 alpha, 1 beta, 1 beta' and 1 omega subunit. When a sigma factor is associated with the core the holoenzyme is formed, which can initiate transcription.

The enzyme catalyses RNA(n) + a ribonucleoside 5'-triphosphate = RNA(n+1) + diphosphate. DNA-dependent RNA polymerase catalyzes the transcription of DNA into RNA using the four ribonucleoside triphosphates as substrates. The sequence is that of DNA-directed RNA polymerase subunit beta from Caulobacter sp. (strain K31).